A 472-amino-acid polypeptide reads, in one-letter code: Eukaryotic translation initiation factor 2 subunit 3 (472 aa).

Ala-2 is subject to N-acetylalanine; partial. The tr-type G domain maps to 39 to 247 (QATINIGTIG…YIVKKIPVPL (209 aa)). The interval 48–55 (GHVAHGKS) is G1. A GTP-binding site is contributed by 51-56 (AHGKST). The tract at residues 76–80 (NITIK) is G2. The segment at 134-137 (DCPG) is G3. Residues 190–193 (NKID) and 225–227 (SAQ) each bind GTP. Residues 190 to 193 (NKID) are G4. The interval 225-227 (SAQ) is G5. Positions 457–469 (GQIRRGVTIKPTV) are interacts with CDC123.

Belongs to the TRAFAC class translation factor GTPase superfamily. Classic translation factor GTPase family. EIF2G subfamily. As to quaternary structure, eukaryotic translation initiation factor 2 eIF2 is a heterotrimeric complex composed of an alpha (EIF2S1), a beta (EIF2S2) and a gamma (EIF2S3) chain. eIF2 is member of the 43S pre-initiation complex (43S PIC).

The protein localises to the cytoplasm. It localises to the cytosol. The enzyme catalyses GTP + H2O = GDP + phosphate + H(+). Functionally, member of the eIF2 complex that functions in the early steps of protein synthesis by forming a ternary complex with GTP and initiator tRNA. This complex binds to a 40S ribosomal subunit, followed by mRNA binding to form the 43S pre-initiation complex (43S PIC). Junction of the 60S ribosomal subunit to form the 80S initiation complex is preceded by hydrolysis of the GTP bound to eIF2 and release of an eIF2-GDP binary complex. In order for eIF2 to recycle and catalyze another round of initiation, the GDP bound to eIF2 must exchange with GTP by way of a reaction catalyzed by eIF-2B. In Gallus gallus (Chicken), this protein is Eukaryotic translation initiation factor 2 subunit 3 (EIF2S3).